A 631-amino-acid chain; its full sequence is Probable potassium transport system protein Kup (631 aa).

Helical transmembrane passes span 17 to 37 (IGLL…SPLY), 56 to 76 (ILGV…FKYM), 109 to 129 (MMMV…SMIT), 147 to 167 (GLDH…FLIQ), 174 to 194 (IGVL…ALGV), 215 to 235 (FFII…LALT), 256 to 276 (WFIL…ALVL), 288 to 308 (LLAP…ATII), 346 to 366 (IYIG…VIGF), 378 to 398 (VAVT…MLML), 403 to 423 (PLLA…FFAA), and 428 to 448 (IFQG…LMTT).

This sequence belongs to the HAK/KUP transporter (TC 2.A.72) family.

The protein resides in the cell inner membrane. It catalyses the reaction K(+)(in) + H(+)(in) = K(+)(out) + H(+)(out). Functionally, transport of potassium into the cell. Likely operates as a K(+):H(+) symporter. This Pseudomonas savastanoi pv. phaseolicola (strain 1448A / Race 6) (Pseudomonas syringae pv. phaseolicola (strain 1448A / Race 6)) protein is Probable potassium transport system protein Kup.